Here is a 746-residue protein sequence, read N- to C-terminus: Polyphosphate kinase (746 aa).

Positions 1-17 are enriched in polar residues; it reads MRQPNTQAEAQHTQPSV. Residues 1-60 form a disordered region; that stretch reads MRQPNTQAEAQHTQPSVGSIAAHRPNTVAATVSGLEPDIDADLDAYEESEESQDGGARLP. Residues 37–53 are compositionally biased toward acidic residues; it reads PDIDADLDAYEESEESQ. Asn-102 is an ATP binding site. Mg(2+) is bound by residues Arg-429 and Arg-459. His-489 serves as the catalytic Phosphohistidine intermediate. ATP is bound by residues Tyr-522, Arg-618, and His-646.

This sequence belongs to the polyphosphate kinase 1 (PPK1) family. It depends on Mg(2+) as a cofactor. Post-translationally, an intermediate of this reaction is the autophosphorylated ppk in which a phosphate is covalently linked to a histidine residue through a N-P bond.

The enzyme catalyses [phosphate](n) + ATP = [phosphate](n+1) + ADP. Functionally, catalyzes the reversible transfer of the terminal phosphate of ATP to form a long-chain polyphosphate (polyP). In Streptomyces coelicolor (strain ATCC BAA-471 / A3(2) / M145), this protein is Polyphosphate kinase.